The sequence spans 321 residues: Probable nucleosome assembly protein (321 aa).

Acidic residues predominate over residues 272-298; that stretch reads EENDYDFGEDFEDEEGEDDDEEDDEEE. Positions 272–321 are disordered; that stretch reads EENDYDFGEDFEDEEGEDDDEEDDEEEQTIKKPSGKGKAQPQQPQDCKQQ. Residues 311 to 321 are compositionally biased toward low complexity; sequence QPQQPQDCKQQ.

It belongs to the nucleosome assembly protein (NAP) family.

The protein resides in the nucleus. May modulate chromatin structure by regulation of histone octamer formation. This chain is Probable nucleosome assembly protein (nap1), found in Dictyostelium discoideum (Social amoeba).